We begin with the raw amino-acid sequence, 113 residues long: DNA-directed RNA polymerase subunit Rpo4 (113 aa).

Belongs to the eukaryotic RPB4 RNA polymerase subunit family. In terms of assembly, part of the 13-subunit RNA polymerase complex. Forms a stalk with Rpo7 that extends from the main structure.

The protein localises to the cytoplasm. The catalysed reaction is RNA(n) + a ribonucleoside 5'-triphosphate = RNA(n+1) + diphosphate. Its function is as follows. DNA-dependent RNA polymerase (RNAP) catalyzes the transcription of DNA into RNA using the four ribonucleoside triphosphates as substrates. This subunit is less well bound than the others. In Saccharolobus solfataricus (strain ATCC 35092 / DSM 1617 / JCM 11322 / P2) (Sulfolobus solfataricus), this protein is DNA-directed RNA polymerase subunit Rpo4.